The following is a 116-amino-acid chain: NADH-quinone oxidoreductase subunit A (116 aa).

3 helical membrane passes run 3-23 (FTLLVVVILTAIALVAVALGI), 61-81 (FAILFLMFDVETVFLFPWAVV), and 85-105 (LGVYGLFSILFFLVILVLGLA).

The protein belongs to the complex I subunit 3 family. In terms of assembly, NDH-1 is composed of 14 different subunits. Subunits NuoA, H, J, K, L, M, N constitute the membrane sector of the complex.

The protein resides in the cell inner membrane. The catalysed reaction is a quinone + NADH + 5 H(+)(in) = a quinol + NAD(+) + 4 H(+)(out). NDH-1 shuttles electrons from NADH, via FMN and iron-sulfur (Fe-S) centers, to quinones in the respiratory chain. The immediate electron acceptor for the enzyme in this species is believed to be a menaquinone. Couples the redox reaction to proton translocation (for every two electrons transferred, four hydrogen ions are translocated across the cytoplasmic membrane), and thus conserves the redox energy in a proton gradient. The protein is NADH-quinone oxidoreductase subunit A of Phocaeicola vulgatus (strain ATCC 8482 / DSM 1447 / JCM 5826 / CCUG 4940 / NBRC 14291 / NCTC 11154) (Bacteroides vulgatus).